Consider the following 563-residue polypeptide: Calmodulin-binding protein 60 G (563 aa).

The interval 1-76 (MKIRNSPSFH…SSCVSMERSR (76 aa)) is calmodulin-binding. Residues 147–263 (ESWTVEGFNR…VSATRLAERK (117 aa)) form a DNA-binding region.

The protein belongs to the plant ACBP60 protein family. In terms of assembly, interacts with calmodulin (CaM) in the presence of calcium ions; this interaction is required for defense responses. As to quaternary structure, (Microbial infection) Interacts with V.dahliae SCP41; the interaction is direct and inhibits CBP60G. In terms of tissue distribution, expressed in seedlings, roots, leaves, inflorescences and flowers, and, to a lower extent, in siliques. Particularly present in guard cells.

Its subcellular location is the nucleus. In terms of biological role, transcription activator that binds DNA in a sequence-specific manner, 5'-GAAATTTTGG-3', to promote the expression of target genes. Recruited to the promoter of ICS1 and other defense-related genes (e.g. PR1, PR2 and EDS5) in response to both biotic (e.g. Pseudomonas syringae pv. maculicola ES4326, P.syringae pv. tomato DC3000, and microbe-associated molecular patterns (MAMPs) such as flg22) and abiotic stresses (e.g. UV-B, drought and abscisic acid), thus triggering rapid defense responses by stimulating salicylic acid (SA) biosynthesis. Involved in basal and systemic acquired resistance to P.syringae and Hyaloperonospora arabidopsidis. Mediates resistance to drought and sensitivity to abscisic acid (ABA), especially for ABA-mediated signaling process that regulates early seedling growth. The chain is Calmodulin-binding protein 60 G from Arabidopsis thaliana (Mouse-ear cress).